A 189-amino-acid chain; its full sequence is Large ribosomal subunit protein bL9 (189 aa).

It belongs to the bacterial ribosomal protein bL9 family.

Its function is as follows. Binds to the 23S rRNA. This is Large ribosomal subunit protein bL9 from Methylocella silvestris (strain DSM 15510 / CIP 108128 / LMG 27833 / NCIMB 13906 / BL2).